We begin with the raw amino-acid sequence, 284 residues long: Bifunctional protein FolD (284 aa).

Residues 166 to 168, Ser191, and Ile232 contribute to the NADP(+) site; that span reads GAS.

It belongs to the tetrahydrofolate dehydrogenase/cyclohydrolase family. As to quaternary structure, homodimer.

The enzyme catalyses (6R)-5,10-methylene-5,6,7,8-tetrahydrofolate + NADP(+) = (6R)-5,10-methenyltetrahydrofolate + NADPH. It catalyses the reaction (6R)-5,10-methenyltetrahydrofolate + H2O = (6R)-10-formyltetrahydrofolate + H(+). It functions in the pathway one-carbon metabolism; tetrahydrofolate interconversion. In terms of biological role, catalyzes the oxidation of 5,10-methylenetetrahydrofolate to 5,10-methenyltetrahydrofolate and then the hydrolysis of 5,10-methenyltetrahydrofolate to 10-formyltetrahydrofolate. The sequence is that of Bifunctional protein FolD from Neisseria gonorrhoeae (strain ATCC 700825 / FA 1090).